We begin with the raw amino-acid sequence, 199 residues long: Prolactin-2 (199 aa).

Cystine bridges form between Cys-4–Cys-11, Cys-58–Cys-174, and Cys-191–Cys-199.

It belongs to the somatotropin/prolactin family.

It localises to the secreted. This Crocodylus novaeguineae (Crocodile) protein is Prolactin-2.